Consider the following 478-residue polypeptide: MDRSLGWQGNSVPEDRTEAGIKRFLEDTTDDGELSKFVKDFSGNESCHPPEAKTWASRPQVPEPRPQAPDLYDDDLEFRPPSWPQSSDNQQYFCAPAPLSPSARPRSPWGKLDPYDSSEDDKEYVGFATLPNQVHRKSVKKGFDFTLMVAGESGLGKSTLVNSLFLTDLYRDRKLLGAEERIMQTVEITKHAVDIEEKGVRLRLTIVDTPGFGDAVNNTECWKPVAEYIDQQFEQYFRDESGLNRKNIQDNRVHCCLYFISPFGHGLRPLDVEFMKALHQRVNIVPILAKADTLTPPEVDRKKRKIREEIEHFGIKIYQFPDCDSDEDEDFKLQDQALKESIPFAVIGSNTVVEARGRRVRGRLYPWGIVEVENPGHCDFVKLRTMLVRTHMQDLKDVTRETHYENYRAQCIQSMTRLVVKERNRNKLTRESGTDLPIPAVPPGTDPETEKLIREKDEELRRMQEMLHKIQKQMKETY.

The tract at residues 38–115 (VKDFSGNESC…RSPWGKLDPY (78 aa)) is disordered. Residues 95 to 108 (APAPLSPSARPRSP) show a composition bias toward low complexity. Residues serine 117 and serine 118 each carry the phosphoserine modification. One can recognise a Septin-type G domain in the interval 141 to 414 (KGFDFTLMVA…ENYRAQCIQS (274 aa)). Residues 151–158 (GESGLGKS) are G1 motif. Residues 151–158 (GESGLGKS) and threonine 185 each bind GTP. Residues 208–211 (DTPG) are G3 motif. Positions 289-292 (AKAD) are G4 motif. 290–298 (KADTLTPPE) lines the GTP pocket. Serine 325 is subject to Phosphoserine. The GTP site is built by glycine 348 and arginine 363. A disordered region spans residues 425 to 448 (RNKLTRESGTDLPIPAVPPGTDPE). Phosphoserine is present on serine 432. Threonine 434 carries the post-translational modification Phosphothreonine. Residues 446-478 (DPETEKLIREKDEELRRMQEMLHKIQKQMKETY) adopt a coiled-coil conformation.

Belongs to the TRAFAC class TrmE-Era-EngA-EngB-Septin-like GTPase superfamily. Septin GTPase family. As to quaternary structure, septins polymerize into heterooligomeric protein complexes that form filaments, and can associate with cellular membranes, actin filaments and microtubules. GTPase activity is required for filament formation. Interacts with SEPTIN8. Component of a septin core octameric complex consisting of SEPTIN12, SEPTIN7, SEPTIN6 and SEPTIN2 or SEPTIN4 in the order 12-7-6-2-2-6-7-12 or 12-7-6-4-4-6-7-12. Interacts with SEPTIN14 (via C-terminus). Interacts with DYRK1A. Interacts with SLC6A3/DAT and SNCA/alpha-synuclein. Interacts with STX1A; in the striatum. Interacts with XIAP (via BIR3 domain) following the induction of apoptosis. Interacts with AREL1 (via HECT domain); in the cytoplasm following induction of apoptosis. Ubiquitinated by AREL1. In terms of processing, phosphorylated by DYRK1A.

Its subcellular location is the cytoplasm. It localises to the cell projection. The protein resides in the cilium. The protein localises to the flagellum. It is found in the cytoplasmic vesicle. Its subcellular location is the secretory vesicle. It localises to the axon. The protein resides in the dendrite. The protein localises to the perikaryon. It is found in the synapse. In terms of biological role, filament-forming cytoskeletal GTPase. Pro-apoptotic protein involved in LGR5-positive intestinal stem cell and Paneth cell expansion in the intestines, via its interaction with XIAP. May also play a role in the regulation of cell fate in the intestine. Positive regulator of apoptosis involved in hematopoietic stem cell homeostasis; via its interaction with XIAP. Negative regulator of repair and hair follicle regeneration in response to injury, due to inhibition of hair follicle stem cell proliferation, potentially via its interaction with XIAP. Plays an important role in male fertility and sperm motility. During spermiogenesis, essential for the establishment of the annulus (a fibrous ring structure connecting the midpiece and the principal piece of the sperm flagellum) which is a requisite for the structural and mechanical integrity of the sperm. Involved in the migration of cortical neurons and the formation of neuron leading processes during embryonic development. Required for dopaminergic metabolism in presynaptic autoreceptors; potentially via activity as a presynaptic scaffold protein. The sequence is that of Septin-4 from Pongo abelii (Sumatran orangutan).